The chain runs to 227 residues: Cytidylate kinase (227 aa).

12–20 (GPSGAGKGT) contributes to the ATP binding site.

This sequence belongs to the cytidylate kinase family. Type 1 subfamily.

The protein resides in the cytoplasm. It catalyses the reaction CMP + ATP = CDP + ADP. The enzyme catalyses dCMP + ATP = dCDP + ADP. The sequence is that of Cytidylate kinase from Photorhabdus laumondii subsp. laumondii (strain DSM 15139 / CIP 105565 / TT01) (Photorhabdus luminescens subsp. laumondii).